Consider the following 78-residue polypeptide: Acyl carrier protein (78 aa).

One can recognise a Carrier domain in the interval 2 to 77 (DDLFKKIQQL…DAYEFIKSQQ (76 aa)). Serine 37 is modified (O-(pantetheine 4'-phosphoryl)serine).

The protein belongs to the acyl carrier protein (ACP) family. 4'-phosphopantetheine is transferred from CoA to a specific serine of apo-ACP by AcpS. This modification is essential for activity because fatty acids are bound in thioester linkage to the sulfhydryl of the prosthetic group.

It is found in the cytoplasm. Its pathway is lipid metabolism; fatty acid biosynthesis. Its function is as follows. Carrier of the growing fatty acid chain in fatty acid biosynthesis. This is Acyl carrier protein from Treponema denticola (strain ATCC 35405 / DSM 14222 / CIP 103919 / JCM 8153 / KCTC 15104).